The sequence spans 193 residues: Cuticle protein 18.7 (193 aa).

Its function is as follows. Component of the cuticle of migratory locust which contains more than 100 different structural proteins. This Locusta migratoria (Migratory locust) protein is Cuticle protein 18.7.